Here is a 513-residue protein sequence, read N- to C-terminus: ATP synthase subunit alpha 2 (513 aa).

152-159 lines the ATP pocket; sequence GDSKTGKT.

The protein belongs to the ATPase alpha/beta chains family. As to quaternary structure, F-type ATPases have 2 components, CF(1) - the catalytic core - and CF(0) - the membrane proton channel. CF(1) has five subunits: alpha(3), beta(3), gamma(1), delta(1), epsilon(1). CF(0) has three main subunits: a(1), b(2) and c(9-12). The alpha and beta chains form an alternating ring which encloses part of the gamma chain. CF(1) is attached to CF(0) by a central stalk formed by the gamma and epsilon chains, while a peripheral stalk is formed by the delta and b chains.

It localises to the cell membrane. The enzyme catalyses ATP + H2O + 4 H(+)(in) = ADP + phosphate + 5 H(+)(out). In terms of biological role, produces ATP from ADP in the presence of a proton gradient across the membrane. The alpha chain is a regulatory subunit. This Mycoplasmopsis pulmonis (strain UAB CTIP) (Mycoplasma pulmonis) protein is ATP synthase subunit alpha 2.